Consider the following 443-residue polypeptide: ATP-dependent RNA helicase SUB2 (443 aa).

A Q motif motif is present at residues 60 to 88; that stretch reads TGFRDFLLKPELLRAITDCGFEHPSEVQQ. The Helicase ATP-binding domain occupies 91–266; sequence IPTAILKVDV…KKFMRNPLEV (176 aa). 104–111 contributes to the ATP binding site; sequence AKSGLGKT. The short motif at 213 to 216 is the DEAD box element; the sequence is DECD. In terms of domain architecture, Helicase C-terminal spans 294–439; sequence KLNELLDNLE…EYPEEGVDAS (146 aa).

Belongs to the DEAD box helicase family. DECD subfamily.

The protein resides in the nucleus. The catalysed reaction is ATP + H2O = ADP + phosphate + H(+). Its function is as follows. ATP-binding RNA helicase involved in transcription elongation and required for the export of mRNA out of the nucleus. SUB2 also plays a role in pre-mRNA splicing and spliceosome assembly. May be involved in rDNA and telomeric silencing, and maintenance of genome integrity. The polypeptide is ATP-dependent RNA helicase SUB2 (SUB2) (Coccidioides immitis (strain RS) (Valley fever fungus)).